Reading from the N-terminus, the 95-residue chain is Cell division topological specificity factor (95 aa).

Belongs to the MinE family.

Functionally, prevents the cell division inhibition by proteins MinC and MinD at internal division sites while permitting inhibition at polar sites. This ensures cell division at the proper site by restricting the formation of a division septum at the midpoint of the long axis of the cell. The sequence is that of Cell division topological specificity factor from Microcystis aeruginosa (strain NIES-843 / IAM M-2473).